Reading from the N-terminus, the 467-residue chain is UDP-N-acetylmuramoylalanine--D-glutamate ligase (467 aa).

Residue 115–121 coordinates ATP; that stretch reads GTDGKTT.

This sequence belongs to the MurCDEF family.

It localises to the cytoplasm. It catalyses the reaction UDP-N-acetyl-alpha-D-muramoyl-L-alanine + D-glutamate + ATP = UDP-N-acetyl-alpha-D-muramoyl-L-alanyl-D-glutamate + ADP + phosphate + H(+). It functions in the pathway cell wall biogenesis; peptidoglycan biosynthesis. In terms of biological role, cell wall formation. Catalyzes the addition of glutamate to the nucleotide precursor UDP-N-acetylmuramoyl-L-alanine (UMA). The chain is UDP-N-acetylmuramoylalanine--D-glutamate ligase from Chlorobaculum parvum (strain DSM 263 / NCIMB 8327) (Chlorobium vibrioforme subsp. thiosulfatophilum).